Consider the following 538-residue polypeptide: Bifunctional purine biosynthesis protein PurH (538 aa).

The region spanning 6-158 (KHIPAPDLHR…KNHAYVATVV (153 aa)) is the MGS-like domain.

The protein belongs to the PurH family.

The catalysed reaction is (6R)-10-formyltetrahydrofolate + 5-amino-1-(5-phospho-beta-D-ribosyl)imidazole-4-carboxamide = 5-formamido-1-(5-phospho-D-ribosyl)imidazole-4-carboxamide + (6S)-5,6,7,8-tetrahydrofolate. It catalyses the reaction IMP + H2O = 5-formamido-1-(5-phospho-D-ribosyl)imidazole-4-carboxamide. It participates in purine metabolism; IMP biosynthesis via de novo pathway; 5-formamido-1-(5-phospho-D-ribosyl)imidazole-4-carboxamide from 5-amino-1-(5-phospho-D-ribosyl)imidazole-4-carboxamide (10-formyl THF route): step 1/1. Its pathway is purine metabolism; IMP biosynthesis via de novo pathway; IMP from 5-formamido-1-(5-phospho-D-ribosyl)imidazole-4-carboxamide: step 1/1. This chain is Bifunctional purine biosynthesis protein PurH, found in Brucella melitensis biotype 2 (strain ATCC 23457).